A 124-amino-acid chain; its full sequence is MARLMGVDLPRDKRMEIALTYIYGIGRTRSQEILEATGISRDMRTKDLTDDQVTQLRDYIEGNLKVEGDLRREVQADIRRKIEIGCYQGLRHRRGLPVRGQRTKTNARTRKGPKRTIAGKKKAR.

Residues 94–124 are disordered; that stretch reads RGLPVRGQRTKTNARTRKGPKRTIAGKKKAR.

The protein belongs to the universal ribosomal protein uS13 family. As to quaternary structure, part of the 30S ribosomal subunit. Forms a loose heterodimer with protein S19. Forms two bridges to the 50S subunit in the 70S ribosome.

Located at the top of the head of the 30S subunit, it contacts several helices of the 16S rRNA. In the 70S ribosome it contacts the 23S rRNA (bridge B1a) and protein L5 of the 50S subunit (bridge B1b), connecting the 2 subunits; these bridges are implicated in subunit movement. Contacts the tRNAs in the A and P-sites. The protein is Small ribosomal subunit protein uS13 of Mycolicibacterium vanbaalenii (strain DSM 7251 / JCM 13017 / BCRC 16820 / KCTC 9966 / NRRL B-24157 / PYR-1) (Mycobacterium vanbaalenii).